Consider the following 393-residue polypeptide: S-adenosylmethionine synthase (393 aa).

Residue His17 participates in ATP binding. Residue Asp19 participates in Mg(2+) binding. Glu45 is a K(+) binding site. 2 residues coordinate L-methionine: Glu58 and Gln106. The segment at 106–116 (QSAHIAQGVDA) is flexible loop. ATP is bound by residues 171–173 (DAK), Asp246, 252–253 (RK), Ala269, and Lys273. Residue Asp246 coordinates L-methionine. Lys277 serves as a coordination point for L-methionine.

This sequence belongs to the AdoMet synthase family. As to quaternary structure, homotetramer; dimer of dimers. Mg(2+) is required as a cofactor. It depends on K(+) as a cofactor.

It is found in the cytoplasm. The catalysed reaction is L-methionine + ATP + H2O = S-adenosyl-L-methionine + phosphate + diphosphate. Its pathway is amino-acid biosynthesis; S-adenosyl-L-methionine biosynthesis; S-adenosyl-L-methionine from L-methionine: step 1/1. In terms of biological role, catalyzes the formation of S-adenosylmethionine (AdoMet) from methionine and ATP. The overall synthetic reaction is composed of two sequential steps, AdoMet formation and the subsequent tripolyphosphate hydrolysis which occurs prior to release of AdoMet from the enzyme. The sequence is that of S-adenosylmethionine synthase from Roseobacter denitrificans (strain ATCC 33942 / OCh 114) (Erythrobacter sp. (strain OCh 114)).